The sequence spans 222 residues: uncharacterized protein (222 aa).

Residues 142–222 are disordered; it reads ARRGGCVHPP…LPDPPSAGHL (81 aa). The segment covering 160-169 has biased composition (low complexity); it reads QSRSISSRRA. Basic residues predominate over residues 182–196; it reads PRRRPHRHRTRPQTR.

The protein belongs to the Rv1128c/1148c/1588c/1702c/1945/3466 family.

This is an uncharacterized protein from Mycobacterium tuberculosis (strain ATCC 25618 / H37Rv).